Consider the following 673-residue polypeptide: Exoribonuclease 2 (673 aa).

The region spanning 191-516 is the RNB domain; sequence RTDLTATPFF…NHRLLKAVIA (326 aa). The 84-residue stretch at 562–645 folds into the S1 motif domain; that stretch reads DKVFNAEIID…ETRSLIAKPA (84 aa). The interval 650-673 is disordered; sequence PGPAPVAPTSEADATPADEAPKAE.

It belongs to the RNR ribonuclease family. RNase II subfamily.

Its subcellular location is the cytoplasm. It catalyses the reaction Exonucleolytic cleavage in the 3'- to 5'-direction to yield nucleoside 5'-phosphates.. Its function is as follows. Involved in mRNA degradation. Hydrolyzes single-stranded polyribonucleotides processively in the 3' to 5' direction. This Aeromonas hydrophila subsp. hydrophila (strain ATCC 7966 / DSM 30187 / BCRC 13018 / CCUG 14551 / JCM 1027 / KCTC 2358 / NCIMB 9240 / NCTC 8049) protein is Exoribonuclease 2.